A 95-amino-acid chain; its full sequence is Small ribosomal subunit protein bS6 (95 aa).

Belongs to the bacterial ribosomal protein bS6 family.

In terms of biological role, binds together with bS18 to 16S ribosomal RNA. This chain is Small ribosomal subunit protein bS6, found in Acholeplasma laidlawii (strain PG-8A).